We begin with the raw amino-acid sequence, 502 residues long: 4,4'-diaponeurosporene oxygenase (502 aa).

Position 8-20 (8-20) interacts with FAD; it reads IIGGGLGGISAAI.

It belongs to the carotenoid/retinoid oxidoreductase family. CrtP subfamily. It depends on FAD as a cofactor.

It catalyses the reaction all-trans-4,4'-diaponeurosporene + 2 AH2 + 2 O2 = 4,4'-diaponeurosporenal + 2 A + 3 H2O. Its pathway is carotenoid biosynthesis; staphyloxanthin biosynthesis; staphyloxanthin from farnesyl diphosphate: step 3/5. Functionally, involved in the biosynthesis of the yellow-orange carotenoid staphyloxanthin, which plays a role in the virulence via its protective function against oxidative stress. Catalyzes the oxidation of the terminal methyl side group of 4,4'-diaponeurosporene to form 4,4'-diaponeurosporen-4-al. This Staphylococcus haemolyticus (strain JCSC1435) protein is 4,4'-diaponeurosporene oxygenase.